Here is a 301-residue protein sequence, read N- to C-terminus: ATP synthase F(0) complex subunit B1, mitochondrial (301 aa).

Residues Met1–Gly21 constitute a mitochondrion transit peptide.

It belongs to the eukaryotic ATPase B chain family. Subunit of the F-type ATPase which has 2 components, CF(1) - the catalytic core - and CF(0) - the membrane proton channel.

Its subcellular location is the mitochondrion. It is found in the mitochondrion inner membrane. In terms of biological role, mitochondrial membrane ATP synthase (F(1)F(0) ATP synthase or Complex V) produces ATP from ADP in the presence of a proton gradient across the membrane which is generated by electron transport complexes of the respiratory chain. F-type ATPases consist of two structural domains, F(1) - containing the extramembraneous catalytic core, and F(0) - containing the membrane proton channel, linked together by a central stalk and a peripheral stalk. During catalysis, ATP synthesis in the catalytic domain of F(1) is coupled via a rotary mechanism of the central stalk subunits to proton translocation. Part of the complex F(0) domain and the peripheric stalk, which acts as a stator to hold the subunits of the catalytic subcomplexes relative to the rotary elements. Plays a role in germline development. The sequence is that of ATP synthase F(0) complex subunit B1, mitochondrial from Caenorhabditis elegans.